We begin with the raw amino-acid sequence, 923 residues long: Smoothelin (923 aa).

A2 carries the N-acetylalanine modification. The stretch at 24–89 (LAERRRIRSA…ARLAGRLESM (66 aa)) forms a coiled coil. The segment at 134 to 456 (SRLPSSGPRE…GTGEPGGSMK (323 aa)) is disordered. Composition is skewed to low complexity over residues 164-179 (QEQQ…TPED) and 192-205 (RAPP…PASP). Positions 237–252 (LPHPSEAPSPEPPMSP) are enriched in pro residues. 2 stretches are compositionally biased toward polar residues: residues 272 to 285 (PSDT…FSNT) and 293 to 314 (TKSC…NREP). 4 positions are modified to phosphoserine: S299, S301, S304, and S340. Phosphothreonine occurs at positions 359 and 372. A compositionally biased stretch (low complexity) spans 366–389 (PSLISTTPASSSSSNSSSPSPSDT). Residues S501, S521, and S574 each carry the phosphoserine modification. 2 disordered regions span residues 542–578 (KMEP…PLSA) and 615–772 (QRKR…ARKA). Positions 601–628 (EERKLIRAALRELRQRKRDQRDKERERR) form a coiled coil. Over residues 615-638 (QRKRDQRDKERERRLREARARPGE) the composition is skewed to basic and acidic residues. The residue at position 641 (S641) is a Phosphoserine. Positions 674–687 (NDGTQTARTTTVES) are enriched in polar residues. Over residues 697–721 (SSSSSTTTTTVQTKSFSSSSSSSSS) the composition is skewed to low complexity. Phosphoserine is present on S735. The span at 744–756 (LERRQAEKKKELM) shows a compositional bias: basic and acidic residues. Position 798 is a phosphoserine (S798). The 108-residue stretch at 805–912 (NSIKQMLLDW…YVQSLYNHLR (108 aa)) folds into the Calponin-homology (CH) domain.

It belongs to the smoothelin family.

Its subcellular location is the cytoplasm. It is found in the cytoskeleton. Its function is as follows. Structural protein of the cytoskeleton. This Mus musculus (Mouse) protein is Smoothelin (Smtn).